The primary structure comprises 127 residues: Large ribosomal subunit protein eL8 (127 aa).

This sequence belongs to the eukaryotic ribosomal protein eL8 family. As to quaternary structure, part of the 50S ribosomal subunit. Probably part of the RNase P complex.

Its subcellular location is the cytoplasm. Its function is as follows. Multifunctional RNA-binding protein that recognizes the K-turn motif in ribosomal RNA, the RNA component of RNase P, box H/ACA, box C/D and box C'/D' sRNAs. This Aeropyrum pernix (strain ATCC 700893 / DSM 11879 / JCM 9820 / NBRC 100138 / K1) protein is Large ribosomal subunit protein eL8.